Here is a 345-residue protein sequence, read N- to C-terminus: Heat-inducible transcription repressor HrcA (345 aa).

It belongs to the HrcA family.

Its function is as follows. Negative regulator of class I heat shock genes (grpE-dnaK-dnaJ and groELS operons). Prevents heat-shock induction of these operons. This is Heat-inducible transcription repressor HrcA from Desulfitobacterium hafniense (strain DSM 10664 / DCB-2).